The primary structure comprises 67 residues: Large ribosomal subunit protein bL35 (67 aa).

Positions 1 to 16 are enriched in basic residues; that stretch reads MPKMKTKSSAKKRFRV. Positions 1–24 are disordered; that stretch reads MPKMKTKSSAKKRFRVRPGGTVKR.

This sequence belongs to the bacterial ribosomal protein bL35 family.

The polypeptide is Large ribosomal subunit protein bL35 (Delftia acidovorans (strain DSM 14801 / SPH-1)).